The following is a 142-amino-acid chain: Large ribosomal subunit protein uL13 (142 aa).

Belongs to the universal ribosomal protein uL13 family. In terms of assembly, part of the 50S ribosomal subunit.

Its function is as follows. This protein is one of the early assembly proteins of the 50S ribosomal subunit, although it is not seen to bind rRNA by itself. It is important during the early stages of 50S assembly. This is Large ribosomal subunit protein uL13 from Alteromonas mediterranea (strain DSM 17117 / CIP 110805 / LMG 28347 / Deep ecotype).